Reading from the N-terminus, the 446-residue chain is MTNKTPADLIVSARWILPVRPTGRLYEHCALVIRDGNIIEIVPTSGIDSQFDYQEHIDLPNQLLMPGLINMHGHAAMSLFRGLADDLPLMEWLQDHIWPAEGEWVDEQFVLDGTQLAMAEMLLSGTTCFSDMYFYPEAAAGAAFEAGMRAQINFPILDFPTQWGSGPEDYIHKGLKLHDNYRSVDLINIGFGPHAPYTVSDEPLKRIAVLAEELQAPIQIHMHETAQEVSDSIANFGVRPLQRIADLGLLGPATQLVHMTQIDEQDIALLTTYSAHVVHCPESNLKLASGFCPVHTLQEHCINTCLGTDGAASNNDLSLFDEMHTASLLGKGVAQRADALKSDTAIEMATINAATAMGLDNIVGSLEKGKRADFIAIDFSNLQQAPIYNLKSHLVNTHVSHLVTHVWVDGKCLVAERELQTLDTKDIYSKACAWQVKIQAQRASGK.

His72 and His74 together coordinate Zn(2+). Glu101 and His194 together coordinate substrate. His221 is a binding site for Zn(2+). Positions 224 and 309 each coordinate substrate. Residue Asp309 participates in Zn(2+) binding.

It belongs to the metallo-dependent hydrolases superfamily. MTA/SAH deaminase family. Requires Zn(2+) as cofactor.

The catalysed reaction is S-adenosyl-L-homocysteine + H2O + H(+) = S-inosyl-L-homocysteine + NH4(+). It catalyses the reaction S-methyl-5'-thioadenosine + H2O + H(+) = S-methyl-5'-thioinosine + NH4(+). Catalyzes the deamination of 5-methylthioadenosine and S-adenosyl-L-homocysteine into 5-methylthioinosine and S-inosyl-L-homocysteine, respectively. Is also able to deaminate adenosine. This is 5-methylthioadenosine/S-adenosylhomocysteine deaminase from Saccharophagus degradans (strain 2-40 / ATCC 43961 / DSM 17024).